The following is a 592-amino-acid chain: Frizzled-5 (592 aa).

An N-terminal signal peptide occupies residues 1–38 (MRKPADEHHFTMETSGMHLVGFWLHVLLLFQLSGLGDS). Topologically, residues 39–248 (ASKDIVCEPI…QDERTFTTFW (210 aa)) are extracellular. Positions 40–161 (SKDIVCEPIT…GDTDRLCMDR (122 aa)) constitute an FZ domain. 5 disulfide bridges follow: C45–C106, C53–C99, C90–C128, C117–C158, and C121–C145. The segment at 162–192 (NSSETTTLSPPFPKPTPKGTPRHRATAKSAP) is disordered. The helical transmembrane segment at 249–269 (IGLWSVLCFVSTFTTVATFLI) threads the bilayer. The Cytoplasmic portion of the chain corresponds to 270–280 (DMERFKYPERP). The chain crosses the membrane as a helical span at residues 281–301 (IIFLAACYLFVSLGYIVRLLA). Residues 302–327 (GHERVACEGTGDQQHILYDTTGPALC) lie on the Extracellular side of the membrane. A helical membrane pass occupies residues 328-348 (TLVFLLIYFFGMASSIWWVVL). Residues 349 to 370 (SFTWFLAAGMKWGNEAIAGYSQ) lie on the Cytoplasmic side of the membrane. A helical membrane pass occupies residues 371–391 (YFHLAAWLVPSVKSIAVLALS). Topologically, residues 392-414 (SVDGDPVAGICYVGNQSLEGLRG) are extracellular. The helical transmembrane segment at 415-435 (FVLAPLVVYLFTGSLFLLAGF) threads the bilayer. The Cytoplasmic portion of the chain corresponds to 436–461 (VSLFRIRSVIKQGGTKTDKLEKLMIR). A helical membrane pass occupies residues 462 to 482 (IGLFTVLYTVPATIVVACLVY). Residues 483 to 512 (EQHYRPSWERALACSCPSERQRLGMGPDYA) lie on the Extracellular side of the membrane. Residues 513 to 533 (VFMLKYFMCLVVGITSGVWIW) traverse the membrane as a helical segment. The Cytoplasmic portion of the chain corresponds to 534–592 (SGKTLESWRRFIARYVPCRTRKPPVSASSMYSEASTALTARAGTAPTGTYHKSAPSSHV).

It belongs to the G-protein coupled receptor Fz/Smo family.

It localises to the cell membrane. Its subcellular location is the golgi apparatus membrane. The protein localises to the synapse. The protein resides in the perikaryon. It is found in the cell projection. It localises to the dendrite. Its subcellular location is the axon. Receptor for Wnt proteins. Following binding, activates the canonical Wnt/beta-catenin signaling pathway. Also activates wnt non-canonical signaling. In neurons, activation of the Wnt pathway promotes formation of synapses. May be involved in transduction and intercellular transmission of polarity information during tissue morphogenesis and/or in differentiated tissues. Plays a role in early eye development, possibly through wnt non-canonical signaling. As a receptor for wnt11, promotes eye formation, at least partially, by antagonizing the Wnt/beta-catenin pathway. In addition, promotes coherence of eye field cells, potentially contributing to the coordinated morphogenetic behaviors of cells in the nascent eye field. This is Frizzled-5 (fzd5) from Danio rerio (Zebrafish).